The sequence spans 433 residues: GTPase Der (433 aa).

EngA-type G domains are found at residues 5–167 (KKVL…GEAN) and 174–349 (IKVG…DQLE). Residues 11-18 (GRPNVGKS), 58-62 (DTGGF), 119-122 (NKVD), 180-187 (GKPNSGKS), 227-231 (DTAGI), and 292-295 (SKWD) contribute to the GTP site. The 80-residue stretch at 350 to 429 (FKTSTPDLNK…PILVELREKI (80 aa)) folds into the KH-like domain.

This sequence belongs to the TRAFAC class TrmE-Era-EngA-EngB-Septin-like GTPase superfamily. EngA (Der) GTPase family. In terms of assembly, associates with the 50S ribosomal subunit.

Its function is as follows. GTPase that plays an essential role in the late steps of ribosome biogenesis. This is GTPase Der from Borreliella afzelii (strain PKo) (Borrelia afzelii).